The primary structure comprises 410 residues: MKNEIIERFTSYVKVDTQSDENNENCPSTPGQLTLANMLADELKSIGMTDITVDDNGYVMATLPANTDKDVPTVGFLAHVDTATDFTGKNVNPQIIESYDGHDIVLNDKLNVVLSPEQFPELSRYKGQTLITTDGTTLLGADNKAGIAEIMTAMAYLIKHPDIKHGTIRVAFTPDEEIGRGPHKFDVGRFNAAFAYTIDGGPLGELQYESFNAAAAKLTCYGKSVHPGTAKNKMVNASKIAMEFHHALPKEEAPEYTEGYEGFYHLLSMNGDVSEAALSYIIRDFDRDRFAERKEYMQKTADALAAKYGNESIKLELRDQYYNMREKIEPVKEIVDVAYQAMKNLDIDPIIEPIRGGTDGSQLSYMGLPTPNIFTGGQNFHGKYEYISVDHMEKAVNVIVEIARLFEERA.

Histidine 79 serves as a coordination point for Zn(2+). Aspartate 81 is a catalytic residue. Aspartate 142 provides a ligand contact to Zn(2+). The active-site Proton acceptor is the glutamate 176. Residues glutamate 177, aspartate 199, and histidine 381 each coordinate Zn(2+).

The protein belongs to the peptidase M20B family. The cofactor is Zn(2+).

The protein resides in the cytoplasm. The catalysed reaction is Release of the N-terminal residue from a tripeptide.. Cleaves the N-terminal amino acid of tripeptides. This is Peptidase T from Bacillus velezensis (strain DSM 23117 / BGSC 10A6 / LMG 26770 / FZB42) (Bacillus amyloliquefaciens subsp. plantarum).